We begin with the raw amino-acid sequence, 540 residues long: Esterase B1 (540 aa).

Cys-68 and Cys-81 are disulfide-bonded. Ser-191 functions as the Acyl-ester intermediate in the catalytic mechanism. Catalysis depends on charge relay system residues Glu-324 and His-442. A glycan (N-linked (GlcNAc...) asparagine) is linked at Asn-452.

This sequence belongs to the type-B carboxylesterase/lipase family.

The enzyme catalyses a carboxylic ester + H2O = an alcohol + a carboxylate + H(+). Its function is as follows. Overproduction of nonspecific esterases is a common mechanism of resistance to organophosphate insecticides. This chain is Esterase B1 (B1), found in Culex pipiens (House mosquito).